A 926-amino-acid polypeptide reads, in one-letter code: Isoleucine--tRNA ligase (926 aa).

A 'HIGH' region motif is present at residues 57–67; the sequence is PYANGNIHMGH. Glu555 serves as a coordination point for L-isoleucyl-5'-AMP. Residues 596 to 600 carry the 'KMSKS' region motif; that stretch reads KMSKS. Lys599 serves as a coordination point for ATP. The Zn(2+) site is built by Cys897, Cys900, Cys914, and Cys917.

This sequence belongs to the class-I aminoacyl-tRNA synthetase family. IleS type 1 subfamily. As to quaternary structure, monomer. It depends on Zn(2+) as a cofactor.

It is found in the cytoplasm. It catalyses the reaction tRNA(Ile) + L-isoleucine + ATP = L-isoleucyl-tRNA(Ile) + AMP + diphosphate. Catalyzes the attachment of isoleucine to tRNA(Ile). As IleRS can inadvertently accommodate and process structurally similar amino acids such as valine, to avoid such errors it has two additional distinct tRNA(Ile)-dependent editing activities. One activity is designated as 'pretransfer' editing and involves the hydrolysis of activated Val-AMP. The other activity is designated 'posttransfer' editing and involves deacylation of mischarged Val-tRNA(Ile). This Natranaerobius thermophilus (strain ATCC BAA-1301 / DSM 18059 / JW/NM-WN-LF) protein is Isoleucine--tRNA ligase.